The chain runs to 626 residues: Chaperone protein DnaK (626 aa).

A Phosphothreonine; by autocatalysis modification is found at T175. Over residues 586-606 (GAEGAAAGADGAGASAGSASG) the composition is skewed to low complexity. Positions 586 to 626 (GAEGAAAGADGAGASAGSASGSDDDTVEAEVVDDDDDKDNK) are disordered. Over residues 607 to 626 (SDDDTVEAEVVDDDDDKDNK) the composition is skewed to acidic residues.

This sequence belongs to the heat shock protein 70 family.

In terms of biological role, acts as a chaperone. The sequence is that of Chaperone protein DnaK from Bifidobacterium longum (strain DJO10A).